The following is a 154-amino-acid chain: Regulatory protein RecX (154 aa).

It belongs to the RecX family.

The protein localises to the cytoplasm. Functionally, modulates RecA activity. The polypeptide is Regulatory protein RecX (Trichlorobacter lovleyi (strain ATCC BAA-1151 / DSM 17278 / SZ) (Geobacter lovleyi)).